The following is a 396-amino-acid chain: S-adenosylmethionine synthase (396 aa).

Residue His14 coordinates ATP. Position 16 (Asp16) interacts with Mg(2+). Position 42 (Glu42) interacts with K(+). 2 residues coordinate L-methionine: Glu55 and Gln98. The segment at 98–108 (QSPDIALGVNE) is flexible loop. ATP is bound by residues 174–176 (DGK), 241–242 (RF), Asp250, 256–257 (RK), Ala273, and Lys277. Asp250 is a binding site for L-methionine. Lys281 lines the L-methionine pocket.

This sequence belongs to the AdoMet synthase family. As to quaternary structure, homotetramer; dimer of dimers. Mg(2+) is required as a cofactor. K(+) serves as cofactor.

The protein localises to the cytoplasm. The enzyme catalyses L-methionine + ATP + H2O = S-adenosyl-L-methionine + phosphate + diphosphate. It participates in amino-acid biosynthesis; S-adenosyl-L-methionine biosynthesis; S-adenosyl-L-methionine from L-methionine: step 1/1. Its function is as follows. Catalyzes the formation of S-adenosylmethionine (AdoMet) from methionine and ATP. The overall synthetic reaction is composed of two sequential steps, AdoMet formation and the subsequent tripolyphosphate hydrolysis which occurs prior to release of AdoMet from the enzyme. This is S-adenosylmethionine synthase from Fervidobacterium nodosum (strain ATCC 35602 / DSM 5306 / Rt17-B1).